Here is a 287-residue protein sequence, read N- to C-terminus: Undecaprenyl-diphosphatase (287 aa).

Helical transmembrane passes span 50–70, 99–119, 128–148, 206–226, 231–251, and 263–283; these read PGVSVTAAIQLGSIVAVIAYF, IAMAVGTLPILAVGLAIKLFW, LRSVPSIAVVSIVMALLLAVA, FLLGIPAITIAGIVELKDALA, AGPLPLVIGILAATVVSWLAI, and TWLFVAYRLLFGVGLLAWWSI.

It belongs to the UppP family.

The protein localises to the cell inner membrane. The catalysed reaction is di-trans,octa-cis-undecaprenyl diphosphate + H2O = di-trans,octa-cis-undecaprenyl phosphate + phosphate + H(+). Catalyzes the dephosphorylation of undecaprenyl diphosphate (UPP). Confers resistance to bacitracin. The polypeptide is Undecaprenyl-diphosphatase (Parasynechococcus marenigrum (strain WH8102)).